Reading from the N-terminus, the 210-residue chain is Small ribosomal subunit protein uS3 (210 aa).

Positions 38–106 (IRQFLKKRLY…EVFININEVR (69 aa)) constitute a KH type-2 domain.

This sequence belongs to the universal ribosomal protein uS3 family. Part of the 30S ribosomal subunit. Forms a tight complex with proteins S10 and S14.

Functionally, binds the lower part of the 30S subunit head. Binds mRNA in the 70S ribosome, positioning it for translation. This is Small ribosomal subunit protein uS3 from Trichlorobacter lovleyi (strain ATCC BAA-1151 / DSM 17278 / SZ) (Geobacter lovleyi).